Consider the following 140-residue polypeptide: Nucleoside diphosphate kinase (140 aa).

Residues K11, F59, R87, T93, R104, and N114 each coordinate ATP. H117 acts as the Pros-phosphohistidine intermediate in catalysis.

It belongs to the NDK family. Homotetramer. The cofactor is Mg(2+).

Its subcellular location is the cytoplasm. The catalysed reaction is a 2'-deoxyribonucleoside 5'-diphosphate + ATP = a 2'-deoxyribonucleoside 5'-triphosphate + ADP. It catalyses the reaction a ribonucleoside 5'-diphosphate + ATP = a ribonucleoside 5'-triphosphate + ADP. Major role in the synthesis of nucleoside triphosphates other than ATP. The ATP gamma phosphate is transferred to the NDP beta phosphate via a ping-pong mechanism, using a phosphorylated active-site intermediate. The sequence is that of Nucleoside diphosphate kinase from Cereibacter sphaeroides (strain ATCC 17029 / ATH 2.4.9) (Rhodobacter sphaeroides).